The sequence spans 265 residues: Undecaprenyl-diphosphatase (265 aa).

Transmembrane regions (helical) follow at residues 38 to 58 (SDMF…IIYW), 80 to 100 (LIVA…LGFE), 107 to 127 (PIAW…WAAA), 135 to 155 (ITWL…VFPG), 175 to 195 (AAAT…ASGY), 213 to 233 (ALAI…KWLL), and 244 to 264 (FAIY…TGMI).

It belongs to the UppP family.

It localises to the cell inner membrane. The enzyme catalyses di-trans,octa-cis-undecaprenyl diphosphate + H2O = di-trans,octa-cis-undecaprenyl phosphate + phosphate + H(+). Functionally, catalyzes the dephosphorylation of undecaprenyl diphosphate (UPP). Confers resistance to bacitracin. This is Undecaprenyl-diphosphatase from Rhizobium etli (strain ATCC 51251 / DSM 11541 / JCM 21823 / NBRC 15573 / CFN 42).